We begin with the raw amino-acid sequence, 498 residues long: Germ cell-less protein-like 2 (498 aa).

The Nuclear localization signal motif lies at 33 to 39 (SRKRKRN). In terms of domain architecture, BTB spans 90-160 (SDIKIRALGR…LYTDADLSIT (71 aa)).

In terms of assembly, interacts with CUL3.

It localises to the nucleus matrix. Its pathway is protein modification; protein ubiquitination. Functionally, possible function in spermatogenesis. Probable substrate-specific adapter of an E3 ubiquitin-protein ligase complex which mediates the ubiquitination and subsequent proteasomal degradation of target proteins. In Mus musculus (Mouse), this protein is Germ cell-less protein-like 2 (Gmcl2).